The primary structure comprises 508 residues: Protein MGF 505-9R (508 aa).

3 ANK repeats span residues 54–83 (SINL…NLHY), 253–282 (QVDT…RKTV), and 313–343 (IIKK…KINL).

The protein belongs to the asfivirus MGF 505 family.

Plays a role in virus cell tropism, and may be required for efficient virus replication in macrophages. This chain is Protein MGF 505-9R, found in Ornithodoros (relapsing fever ticks).